A 155-amino-acid polypeptide reads, in one-letter code: uncharacterized protein (155 aa).

Disordered stretches follow at residues R24 to K63 and K80 to E155. Phosphoserine is present on S50. An N6-acetyllysine modification is found at K108. Residues K128 to S147 show a composition bias toward polar residues. S130, S147, and S150 each carry phosphoserine.

This is an uncharacterized protein from Mus musculus (Mouse).